The chain runs to 468 residues: Aspartate ammonia-lyase (468 aa).

Thr-99, Ser-138, Thr-139, Asn-140, and Thr-185 together coordinate L-aspartate. Positions 315–324 (GSSIMPGKVN) are SS loop. Ser-316 serves as the catalytic Proton acceptor. The L-aspartate site is built by Ser-317 and Lys-322.

It belongs to the class-II fumarase/aspartase family. Aspartase subfamily. As to quaternary structure, homotetramer.

It catalyses the reaction L-aspartate = fumarate + NH4(+). In terms of biological role, catalyzes the reversible conversion of L-aspartate to fumarate and ammonia. In Helicobacter pylori (strain ATCC 700392 / 26695) (Campylobacter pylori), this protein is Aspartate ammonia-lyase (aspA).